Here is a 166-residue protein sequence, read N- to C-terminus: NAD(P)H-quinone oxidoreductase subunit I, chloroplastic (166 aa).

4Fe-4S ferredoxin-type domains follow at residues 55–84 and 95–124; these read GRIH…VDWK and LNYS…MTEE. Positions 64, 67, 70, 74, 104, 107, 110, and 114 each coordinate [4Fe-4S] cluster.

It belongs to the complex I 23 kDa subunit family. NDH is composed of at least 16 different subunits, 5 of which are encoded in the nucleus. It depends on [4Fe-4S] cluster as a cofactor.

The protein resides in the plastid. Its subcellular location is the chloroplast thylakoid membrane. The catalysed reaction is a plastoquinone + NADH + (n+1) H(+)(in) = a plastoquinol + NAD(+) + n H(+)(out). The enzyme catalyses a plastoquinone + NADPH + (n+1) H(+)(in) = a plastoquinol + NADP(+) + n H(+)(out). Its function is as follows. NDH shuttles electrons from NAD(P)H:plastoquinone, via FMN and iron-sulfur (Fe-S) centers, to quinones in the photosynthetic chain and possibly in a chloroplast respiratory chain. The immediate electron acceptor for the enzyme in this species is believed to be plastoquinone. Couples the redox reaction to proton translocation, and thus conserves the redox energy in a proton gradient. This Picradeniopsis absinthifolia (Hairyseed bahia) protein is NAD(P)H-quinone oxidoreductase subunit I, chloroplastic.